Consider the following 284-residue polypeptide: Ribosomal RNA small subunit methyltransferase A (284 aa).

Residues Asn-28, Leu-30, Gly-55, Glu-77, Asp-103, and Asn-123 each contribute to the S-adenosyl-L-methionine site.

The protein belongs to the class I-like SAM-binding methyltransferase superfamily. rRNA adenine N(6)-methyltransferase family. RsmA subfamily.

The protein resides in the cytoplasm. It catalyses the reaction adenosine(1518)/adenosine(1519) in 16S rRNA + 4 S-adenosyl-L-methionine = N(6)-dimethyladenosine(1518)/N(6)-dimethyladenosine(1519) in 16S rRNA + 4 S-adenosyl-L-homocysteine + 4 H(+). Specifically dimethylates two adjacent adenosines (A1518 and A1519) in the loop of a conserved hairpin near the 3'-end of 16S rRNA in the 30S particle. May play a critical role in biogenesis of 30S subunits. The polypeptide is Ribosomal RNA small subunit methyltransferase A (Bradyrhizobium diazoefficiens (strain JCM 10833 / BCRC 13528 / IAM 13628 / NBRC 14792 / USDA 110)).